The sequence spans 368 residues: CST complex subunit STN1 (368 aa).

Positions 2 to 192 are interaction with CTC1; sequence AVSLGDDDAD…KCYDQPFKMP (191 aa). Residues 58-162 constitute a DNA-binding region (OB); that stretch reads VDVLGIVVYK…EIKATSFYKV (105 aa). Winged helix-turn-helix (wHTH) regions lie at residues 201-295 and 296-368; these read AGGS…NVTE and QDKD…YIVL.

It belongs to the CTC1 family. Component of the CST complex.

It localises to the nucleus. The protein localises to the chromosome. It is found in the telomere. Its function is as follows. Component of the CST complex proposed to act as a specialized replication factor promoting DNA replication under conditions of replication stress or natural replication barriers such as the telomere duplex. The CST complex binds single-stranded DNA with high affinity in a sequence-independent manner, while isolated subunits bind DNA with low affinity by themselves. Initially the CST complex has been proposed to protect telomeres from DNA degradation. However, the CST complex has been shown to be involved in several aspects of telomere replication. The polypeptide is CST complex subunit STN1 (Danio rerio (Zebrafish)).